The primary structure comprises 361 residues: Mitogen-activated protein kinase 14B (361 aa).

A Protein kinase domain is found at 25–309 (YQNLSPVGSG…ASQALAHPYF (285 aa)). Residues 31–39 (VGSGAYGSV) and Lys54 contribute to the ATP site. Asp151 functions as the Proton acceptor in the catalytic mechanism. Thr181 carries the post-translational modification Phosphothreonine; by MAP2K6. A TXY motif is present at residues 181–183 (TGY). Tyr183 is subject to Phosphotyrosine; by MAP2K6.

This sequence belongs to the protein kinase superfamily. CMGC Ser/Thr protein kinase family. MAP kinase subfamily. Mg(2+) is required as a cofactor. Post-translationally, dually phosphorylated on Thr-181 and Tyr-183, which activates the enzyme. Predominantly expressed in the ovary. Lower levels present in brain, gill, heart, spleen, kidney, muscle and gut.

It is found in the cytoplasm. It localises to the nucleus. The catalysed reaction is L-seryl-[protein] + ATP = O-phospho-L-seryl-[protein] + ADP + H(+). It carries out the reaction L-threonyl-[protein] + ATP = O-phospho-L-threonyl-[protein] + ADP + H(+). With respect to regulation, activated by threonine and tyrosine phosphorylation by the dual specificity kinase, MKK6. Functionally, serine/threonine kinase which acts as an essential component of the MAP kinase signal transduction pathway. Mapk14b is one of the four p38 MAPKs which play an important role in the cascades of cellular responses evoked by extracellular stimuli such as pro-inflammatory cytokines or physical stress leading to direct activation of transcription factors. Accordingly, p38 MAPKs phosphorylate a broad range of proteins and it has been estimated that they may have approximately 200 to 300 substrates each. Some of the targets are downstream kinases which are activated through phosphorylation and further phosphorylate additional targets. The sequence is that of Mitogen-activated protein kinase 14B (mapk14b) from Cyprinus carpio (Common carp).